The following is a 166-amino-acid chain: CDP-archaeol synthase (166 aa).

Transmembrane regions (helical) follow at residues 42-62 (FFGGVVSGVLVGLIEIWAATA), 73-93 (FLSVTLLATGALLGDLAKSFL), 104-124 (SWFLADQYDLVVGSFLLILIF), and 128-148 (WLFGTITLPIAVWIVVMTPLL).

This sequence belongs to the CDP-archaeol synthase family. It depends on Mg(2+) as a cofactor.

The protein resides in the cell membrane. The catalysed reaction is 2,3-bis-O-(geranylgeranyl)-sn-glycerol 1-phosphate + CTP + H(+) = CDP-2,3-bis-O-(geranylgeranyl)-sn-glycerol + diphosphate. It functions in the pathway membrane lipid metabolism; glycerophospholipid metabolism. Catalyzes the formation of CDP-2,3-bis-(O-geranylgeranyl)-sn-glycerol (CDP-archaeol) from 2,3-bis-(O-geranylgeranyl)-sn-glycerol 1-phosphate (DGGGP) and CTP. This reaction is the third ether-bond-formation step in the biosynthesis of archaeal membrane lipids. The chain is CDP-archaeol synthase from Methanoculleus marisnigri (strain ATCC 35101 / DSM 1498 / JR1).